We begin with the raw amino-acid sequence, 27 residues long: Carcinustatin-20 (27 aa).

Leu27 bears the Leucine amide mark.

The protein belongs to the allatostatin family.

Its subcellular location is the secreted. In terms of biological role, may act as a neurotransmitter or neuromodulator. The protein is Carcinustatin-20 of Carcinus maenas (Common shore crab).